The chain runs to 372 residues: Hydrogenase-1 small chain (372 aa).

The tat-type signal signal peptide spans 1–45 (MNNEETFYQAMRRQGVTRRSFLKYCSLAATSLGLGAGMAPKIAWA). Over 46-326 (LENKPRIPVV…QMGTHSTADT (281 aa)) the chain is Periplasmic. Positions 62, 65, 160, 194, 232, 235, 260, and 266 each coordinate [4Fe-4S] cluster. The [3Fe-4S] cluster site is built by Cys-275, Cys-294, and Cys-297. The helical transmembrane segment at 327–347 (VGLTALGVVAAAVGVHAVASA) threads the bilayer. The interval 347–372 (AVDQRRRHNQQPTETEHQPGNEDKQA) is disordered. Residues 348–372 (VDQRRRHNQQPTETEHQPGNEDKQA) are Cytoplasmic-facing. The span at 360-372 (ETEHQPGNEDKQA) shows a compositional bias: basic and acidic residues.

Belongs to the [NiFe]/[NiFeSe] hydrogenase small subunit family. In terms of assembly, heterodimer of a large and a small subunit. Requires [4Fe-4S] cluster as cofactor. [3Fe-4S] cluster is required as a cofactor. Predicted to be exported by the Tat system. The position of the signal peptide cleavage has not been experimentally proven.

It localises to the cell inner membrane. The enzyme catalyses H2 + A = AH2. Functionally, this is one of three E.coli hydrogenases synthesized in response to different physiological conditions. HYD1 is believed to have a role in hydrogen cycling during fermentative growth. This Escherichia coli O6:H1 (strain CFT073 / ATCC 700928 / UPEC) protein is Hydrogenase-1 small chain (hyaA).